We begin with the raw amino-acid sequence, 468 residues long: ATP synthase subunit beta 2 (468 aa).

Residue 155–162 (GGAGVGKT) participates in ATP binding.

The protein belongs to the ATPase alpha/beta chains family. In terms of assembly, F-type ATPases have 2 components, CF(1) - the catalytic core - and CF(0) - the membrane proton channel. CF(1) has five subunits: alpha(3), beta(3), gamma(1), delta(1), epsilon(1). CF(0) has four main subunits: a(1), b(1), b'(1) and c(9-12).

It localises to the cell inner membrane. The enzyme catalyses ATP + H2O + 4 H(+)(in) = ADP + phosphate + 5 H(+)(out). Produces ATP from ADP in the presence of a proton gradient across the membrane. The catalytic sites are hosted primarily by the beta subunits. The polypeptide is ATP synthase subunit beta 2 (Chlorobium luteolum (strain DSM 273 / BCRC 81028 / 2530) (Pelodictyon luteolum)).